The sequence spans 153 residues: MLAFNFFGATEGGLFDINATLPLMAIQVVALTYILNSLFFKPVGKVVEKREKFVSNNIMEAKNKLSEVEKLEADLLSQLQSARSEAQKIVSDAENESDKLYKEALELANNEANASKEKARLEIENQTSSARDQLFKQADDLSELIVNRLILEK.

Residues 23–40 (LMAIQVVALTYILNSLFF) traverse the membrane as a helical segment.

This sequence belongs to the ATPase B chain family. In terms of assembly, F-type ATPases have 2 components, F(1) - the catalytic core - and F(0) - the membrane proton channel. F(1) has five subunits: alpha(3), beta(3), gamma(1), delta(1), epsilon(1). F(0) has four main subunits: a(1), b(1), b'(1) and c(10-14). The alpha and beta chains form an alternating ring which encloses part of the gamma chain. F(1) is attached to F(0) by a central stalk formed by the gamma and epsilon chains, while a peripheral stalk is formed by the delta, b and b' chains.

Its subcellular location is the cellular thylakoid membrane. In terms of biological role, f(1)F(0) ATP synthase produces ATP from ADP in the presence of a proton or sodium gradient. F-type ATPases consist of two structural domains, F(1) containing the extramembraneous catalytic core and F(0) containing the membrane proton channel, linked together by a central stalk and a peripheral stalk. During catalysis, ATP synthesis in the catalytic domain of F(1) is coupled via a rotary mechanism of the central stalk subunits to proton translocation. Its function is as follows. Component of the F(0) channel, it forms part of the peripheral stalk, linking F(1) to F(0). The b'-subunit is a diverged and duplicated form of b found in plants and photosynthetic bacteria. In Prochlorococcus marinus (strain MIT 9515), this protein is ATP synthase subunit b'.